Here is a 405-residue protein sequence, read N- to C-terminus: Phosphoglycerate kinase (405 aa).

Residues 21–23, Arg-38, 59–62, Arg-116, and Arg-156 contribute to the substrate site; these read DFN and HQSR. Residues Glu-330 and 355 to 358 contribute to the ATP site; that span reads GGHT.

The protein belongs to the phosphoglycerate kinase family. As to quaternary structure, monomer.

The protein resides in the cytoplasm. The enzyme catalyses (2R)-3-phosphoglycerate + ATP = (2R)-3-phospho-glyceroyl phosphate + ADP. It functions in the pathway carbohydrate degradation; glycolysis; pyruvate from D-glyceraldehyde 3-phosphate: step 2/5. The sequence is that of Phosphoglycerate kinase from Methanocorpusculum labreanum (strain ATCC 43576 / DSM 4855 / Z).